A 500-amino-acid polypeptide reads, in one-letter code: MSEQQYIMAIDQGTTSSRAIIFDHDGNKVAISQQEFPQYFPQPGWVEHDPLEIWDSVQSVISNVMIKSQIKPYKIAAIGITNQRETTVIWDRHTGKPIYNAIVWQSKQTSDIAEQLIKDGYKDMIHQKTGLVIDSYFAATKIKWILDHVPGAREKAAKGDLMFGTIDTWLLWNLSGRRVHATDVTNASRTMLFNIHTLDWDQDILDLLDIPQSLLPVVKPSSAIYGYTGDYHFYGVQIPIAGIAGDQQAALFGQAAYDKGSIKNTYGTGAFIVMNTGLKPTLSDNGLLTTIAYGLDGQTHYALEGSIFVAGSAVQWLRDGLKMFDKASESEQMAVDAKTTGGVYVVPAFTGLGAPYWDQEVRGAMFGLTRGTERGHIIRATLEAIAYQTKDVVDTMVKDTQLPLTALTVNGGASRNNFMMQFQADILQTPIKRAAMEETTALGAAFLAGLAVDFWEDQDELRKLSRIGDQFDPQMDPQKAADLYRGWQRAIAAAQFYGKD.

Threonine 14 provides a ligand contact to ADP. Threonine 14, threonine 15, and serine 16 together coordinate ATP. Threonine 14 is a sn-glycerol 3-phosphate binding site. Arginine 18 provides a ligand contact to ADP. Sn-glycerol 3-phosphate is bound by residues arginine 84, glutamate 85, and tyrosine 136. The glycerol site is built by arginine 84, glutamate 85, and tyrosine 136. Histidine 232 carries the phosphohistidine; by HPr modification. Aspartate 246 contacts sn-glycerol 3-phosphate. Residues aspartate 246 and glutamine 247 each coordinate glycerol. ADP contacts are provided by threonine 268 and glycine 311. 4 residues coordinate ATP: threonine 268, glycine 311, glutamine 315, and glycine 412. Glycine 412 and asparagine 416 together coordinate ADP.

This sequence belongs to the FGGY kinase family. As to quaternary structure, homotetramer and homodimer (in equilibrium). The phosphoenolpyruvate-dependent sugar phosphotransferase system (PTS), including enzyme I, and histidine-containing protein (HPr) are required for the phosphorylation, which leads to the activation of the enzyme.

The catalysed reaction is glycerol + ATP = sn-glycerol 3-phosphate + ADP + H(+). The protein operates within polyol metabolism; glycerol degradation via glycerol kinase pathway; sn-glycerol 3-phosphate from glycerol: step 1/1. Activated by phosphorylation and inhibited by fructose 1,6-bisphosphate (FBP). Key enzyme in the regulation of glycerol uptake and metabolism. Catalyzes the phosphorylation of glycerol to yield sn-glycerol 3-phosphate. The chain is Glycerol kinase from Limosilactobacillus reuteri (strain DSM 20016) (Lactobacillus reuteri).